A 374-amino-acid polypeptide reads, in one-letter code: Probable inactive patatin-3-Kuras 1 (374 aa).

The signal sequence occupies residues 1-11 (MMLATTSSTFA). A PNPLA domain is found at 20-217 (LSIDGGGIKG…AAVDPSLLSI (198 aa)). Residues 24–29 (GGGIKG) carry the GXGXXG motif. N-linked (GlcNAc...) asparagine glycosylation is found at N48 and N191. The active-site Proton acceptor is the D204. The N-linked (GlcNAc...) asparagine glycan is linked to N257.

The protein belongs to the patatin family. N-glycosylated. In terms of tissue distribution, tuber.

The protein resides in the vacuole. The protein is Probable inactive patatin-3-Kuras 1 (pat3-k1) of Solanum tuberosum (Potato).